Here is a 738-residue protein sequence, read N- to C-terminus: Platelet endothelial cell adhesion molecule (738 aa).

The signal sequence occupies residues Met-1–Gly-27. Topologically, residues Gln-28–Lys-601 are extracellular. 3 consecutive Ig-like C2-type domains span residues Asn-35–Ala-121, Gly-145–Phe-233, and Pro-236–Ser-315. N-linked (GlcNAc...) asparagine glycans are attached at residues Asn-52, Asn-84, and Asn-151. Cys-57 and Cys-109 are joined by a disulfide. 2 cysteine pairs are disulfide-bonded: Cys-152/Cys-206 and Cys-256/Cys-304. Residues Asn-301, Asn-320, Asn-344, Asn-356, Asn-453, and Asn-551 are each glycosylated (N-linked (GlcNAc...) asparagine). 3 Ig-like C2-type domains span residues Pro-328–Gln-401, Gly-424–Arg-493, and Pro-499–Thr-591. Disulfide bonds link Cys-347-Cys-386, Cys-431-Cys-476, and Cys-523-Cys-572. The helical transmembrane segment at Gly-602–Ala-620 threads the bilayer. At Lys-621 to Thr-738 the chain is on the cytoplasmic side. Residue Cys-622 is the site of S-palmitoyl cysteine attachment. The segment at Glu-658 to Glu-715 is disordered. Residues Ser-686 to Ala-698 show a composition bias toward polar residues. 2 short sequence motifs (ITIM motif) span residues Val-688 to Val-693 and Thr-711 to Val-716. Tyr-690 and Tyr-713 each carry phosphotyrosine; by FER. Basic and acidic residues predominate over residues Glu-699–Glu-715. Positions Thr-709–Ser-729 are membrane-bound segment which detaches upon phosphorylation. The interval Pro-721–Thr-738 is may play a role in cytoprotective signaling. Ser-729 and Ser-734 each carry phosphoserine.

In terms of assembly, trans-homodimer (via Ig-like C2-type 1 and Ig-like C2-type 2 domains); trans-homodimerization is required for cell-cell interaction. Forms a complex with BDKRB2 and GNAQ. Interacts with BDKRB2 and GNAQ. Interacts with PTPN11; Tyr-713 is critical for PTPN11 recruitment. Interacts with FER. Interacts (via Ig-like C2-type domain 6) with CD177; the interaction is Ca(2+)-dependent; the interaction is direct. In terms of processing, phosphorylated on Ser and Tyr residues after cellular activation by src kinases. Upon activation, phosphorylated on Ser-729 which probably initiates the dissociation of the membrane-interaction segment (residues 709-729) from the cell membrane allowing the sequential phosphorylation of Tyr-713 and Tyr-690. Constitutively phosphorylated on Ser-734 in resting platelets. Phosphorylated on tyrosine residues by FER and FES in response to FCER1 activation. In endothelial cells Fyn mediates mechanical-force (stretch or pull) induced tyrosine phosphorylation. Palmitoylation by ZDHHC21 is necessary for cell surface expression in endothelial cells and enrichment in membrane rafts. Expressed on platelets and leukocytes and is primarily concentrated at the borders between endothelial cells. Expressed in human umbilical vein endothelial cells (HUVECs) (at protein level). Expressed on neutrophils (at protein level). Isoform Long predominates in all tissues examined. Isoform Delta12 is detected only in trachea. Isoform Delta14-15 is only detected in lung. Isoform Delta14 is detected in all tissues examined with the strongest expression in heart. Isoform Delta15 is expressed in brain, testis, ovary, cell surface of platelets, human umbilical vein endothelial cells (HUVECs), Jurkat T-cell leukemia, human erythroleukemia (HEL) and U-937 histiocytic lymphoma cell lines (at protein level).

Its subcellular location is the cell membrane. The protein localises to the membrane raft. It localises to the cell junction. Cell adhesion molecule which is required for leukocyte transendothelial migration (TEM) under most inflammatory conditions. Tyr-690 plays a critical role in TEM and is required for efficient trafficking of PECAM1 to and from the lateral border recycling compartment (LBRC) and is also essential for the LBRC membrane to be targeted around migrating leukocytes. Trans-homophilic interaction may play a role in endothelial cell-cell adhesion via cell junctions. Heterophilic interaction with CD177 plays a role in transendothelial migration of neutrophils. Homophilic ligation of PECAM1 prevents macrophage-mediated phagocytosis of neighboring viable leukocytes by transmitting a detachment signal. Promotes macrophage-mediated phagocytosis of apoptotic leukocytes by tethering them to the phagocytic cells; PECAM1-mediated detachment signal appears to be disabled in apoptotic leukocytes. Modulates bradykinin receptor BDKRB2 activation. Regulates bradykinin- and hyperosmotic shock-induced ERK1/2 activation in endothelial cells. Induces susceptibility to atherosclerosis. In terms of biological role, does not protect against apoptosis. The protein is Platelet endothelial cell adhesion molecule (PECAM1) of Homo sapiens (Human).